A 350-amino-acid polypeptide reads, in one-letter code: Putative D-xylulose reductase (350 aa).

Positions 43, 68, and 154 each coordinate Zn(2+).

Belongs to the zinc-containing alcohol dehydrogenase family. The cofactor is Zn(2+).

The catalysed reaction is xylitol + NAD(+) = D-xylulose + NADH + H(+). This chain is Putative D-xylulose reductase, found in Agrobacterium fabrum (strain C58 / ATCC 33970) (Agrobacterium tumefaciens (strain C58)).